The sequence spans 662 residues: UvrABC system protein B (662 aa).

A Helicase ATP-binding domain is found at 25 to 412 (EGIEKGLKMQ…SQKIVEQIIR (388 aa)). 38 to 45 (GVTGSGKT) lines the ATP pocket. Positions 91-114 (YYDYYQPEAYLPATDTYIEKDSAI) match the Beta-hairpin motif. The Helicase C-terminal domain maps to 429-595 (QVDDLYGEIK…TVQKAVRDVI (167 aa)). The UVR domain occupies 622 to 657 (KQYVEKLTREMKEAAKALEFEKAAMLRDLIIELRAQ).

The protein belongs to the UvrB family. As to quaternary structure, forms a heterotetramer with UvrA during the search for lesions. Interacts with UvrC in an incision complex.

The protein resides in the cytoplasm. In terms of biological role, the UvrABC repair system catalyzes the recognition and processing of DNA lesions. A damage recognition complex composed of 2 UvrA and 2 UvrB subunits scans DNA for abnormalities. Upon binding of the UvrA(2)B(2) complex to a putative damaged site, the DNA wraps around one UvrB monomer. DNA wrap is dependent on ATP binding by UvrB and probably causes local melting of the DNA helix, facilitating insertion of UvrB beta-hairpin between the DNA strands. Then UvrB probes one DNA strand for the presence of a lesion. If a lesion is found the UvrA subunits dissociate and the UvrB-DNA preincision complex is formed. This complex is subsequently bound by UvrC and the second UvrB is released. If no lesion is found, the DNA wraps around the other UvrB subunit that will check the other stand for damage. The protein is UvrABC system protein B of Carboxydothermus hydrogenoformans (strain ATCC BAA-161 / DSM 6008 / Z-2901).